A 212-amino-acid chain; its full sequence is Cytidylate kinase (212 aa).

9–17 (GPAAAGKGT) serves as a coordination point for ATP.

The protein belongs to the cytidylate kinase family. Type 1 subfamily.

It localises to the cytoplasm. The catalysed reaction is CMP + ATP = CDP + ADP. It catalyses the reaction dCMP + ATP = dCDP + ADP. In Sinorhizobium medicae (strain WSM419) (Ensifer medicae), this protein is Cytidylate kinase.